Reading from the N-terminus, the 1028-residue chain is Sodium/potassium-transporting ATPase subunit alpha-4 (1028 aa).

A disordered region spans residues 1–36 (MEPGKETAATSEQKPRPTLRASNTNRQPKVKRRKKD). The Cytoplasmic portion of the chain corresponds to 1–92 (MEPGKETAAT…NVLTPPPTTP (92 aa)). Residues 87 to 89 (PPP) form an interaction with phosphoinositide-3 kinase region. Residues 93–113 (EWIKFCKQLFGGFSLLLWTGS) form a helical membrane-spanning segment. At 114 to 137 (LLCFLAYGIHVSYYQENANKDNLY) the chain is on the extracellular side. Residues 138–158 (LGIVLSAVVIITGCFSYYQEA) form a helical membrane-spanning segment. The Cytoplasmic segment spans residues 159-294 (KSSKIMESFK…MGKTPIATEI (136 aa)). A helical membrane pass occupies residues 295 to 314 (EHFIHIITAVAVFLGVTFFF). At 315–326 (LSLILGYTWLDA) the chain is on the extracellular side. The helical transmembrane segment at 327–344 (VIFLIGIIVANVPEGLLA) threads the bilayer. At 345 to 777 (TVTVCLTLTA…EEGRLIFDNL (433 aa)) the chain is on the cytoplasmic side. Catalysis depends on Asp382, which acts as the 4-aspartylphosphate intermediate. Asp722 and Asp726 together coordinate Mg(2+). Residues 778-797 (KKSIAYTLTSNIPEITPFLL) form a helical membrane-spanning segment. Over 798-807 (FIVLSIPLPL) the chain is Extracellular. The helical transmembrane segment at 808–828 (GTITILCIDLGTDMVPAISLA) threads the bilayer. Topologically, residues 829–848 (YETPESDIMKRLPRNPKTDN) are cytoplasmic. A helical transmembrane segment spans residues 849–871 (LVNDRLIGMAYGQIGMIQALAGF). Topologically, residues 872–923 (FTYFVILAENGFKPLDLLGIRLYWDDTNLNDLEDTYGQQWTYEQRKVVEFTC) are extracellular. The chain crosses the membrane as a helical span at residues 924-943 (QTAFFISIVIVQWADLIICK). Residues 944-956 (TRRNSLFKQGMKN) are Cytoplasmic-facing. Ser948 carries the phosphoserine; by PKA modification. A helical membrane pass occupies residues 957 to 975 (KVLIFGLLEETILAACLSY). Residues 976 to 990 (IPGMDVALRMYPLKI) lie on the Extracellular side of the membrane. Residues 991-1011 (NWWFCALPYSVLIFIYDEVRK) form a helical membrane-spanning segment. The Cytoplasmic portion of the chain corresponds to 1012-1028 (LIIRRRPGGWLEKETYY).

The protein belongs to the cation transport ATPase (P-type) (TC 3.A.3) family. Type IIC subfamily. The sodium/potassium-transporting ATPase is composed of a catalytic alpha subunit, an auxiliary non-catalytic beta subunit and an additional regulatory subunit.

It localises to the cell membrane. It carries out the reaction K(+)(out) + Na(+)(in) + ATP + H2O = K(+)(in) + Na(+)(out) + ADP + phosphate + H(+). Its activity is regulated as follows. Specifically inhibited by an endogenous cardiac glycoside, ouabain. Its function is as follows. This is the catalytic component of the active enzyme, which catalyzes the hydrolysis of ATP coupled with the exchange of sodium and potassium ions across the plasma membrane. This action creates the electrochemical gradient of sodium and potassium ions, providing the energy for active transport of various nutrients. Plays a role in sperm motility. The protein is Sodium/potassium-transporting ATPase subunit alpha-4 (Atp1a4) of Rattus norvegicus (Rat).